We begin with the raw amino-acid sequence, 602 residues long: MYDYAFVHLKFTVPAAVLLTAIAYPILNRIHLIQTGFLVVVAFTAALPWDAYLIKHKVWSYPPEAIVGPRLLGIPFEELFFFVIQTYITALVYILFNKPVLHALHLNNQQNPPAWMRVVKVTGQVVLVALSVWGWNAAQVHQETSYLGLILVWACPFLLAIWTLAGRFILSLPWYATVLPMFLPTFYLWAVDEFALHRGTWSIGSGTKLDFCLFGKLDIEEATFFLVTNMLIVGGMAAFDQYLAVIYAFPTLFPKVNRYPTTHMLLQSRLINTSRYDLERIEGLREAVERLRLKSRSFYLANSLFSGRLRIDLILLYSFCRLADDLVDDAKSRREVLSWTAKLNHFLDLHYKDADATEDPKKKAERIDAYIKTAFPPCAYQALHLLPTHILPPKPLYDLIKGFEMDSQFTFHGTSDSTDLQYPIADDKDLENYAIYVAGTVGELCIALIIYHCLPDMSDTQKRELETAACRMGIALQYVNIARDIVVDARIGRVYLPTTWLKKEGLTHKMVLENPEGPEVIERMRRRLLENAFELYGGARPEMQRIPSEARGPMIGAVENYMAIGRVLRERKEGTVFVRMEGRATVPKRRRLSTLLRALYEQ.

The tract at residues 1–241 (MYDYAFVHLK…IVGGMAAFDQ (241 aa)) is lycopene beta-cyclase. The next 7 membrane-spanning stretches (helical) occupy residues 6–26 (FVHLKFTVPAAVLLTAIAYPI), 30–50 (IHLIQTGFLVVVAFTAALPWD), 76–96 (FEELFFFVIQTYITALVYILF), 118–138 (VVKVTGQVVLVALSVWGWNAA), 146–166 (YLGLILVWACPFLLAIWTLAG), 168–188 (FILSLPWYATVLPMFLPTFYL), and 230–250 (MLIVGGMAAFDQYLAVIYAFP). Residues 248 to 602 (AFPTLFPKVN…STLLRALYEQ (355 aa)) form a phytoene synthase region.

It in the N-terminal section; belongs to the lycopene beta-cyclase family. The protein in the C-terminal section; belongs to the phytoene/squalene synthase family.

It localises to the membrane. It carries out the reaction all-trans-lycopene = gamma-carotene. The catalysed reaction is gamma-carotene = all-trans-beta-carotene. It catalyses the reaction 2 (2E,6E,10E)-geranylgeranyl diphosphate = 15-cis-phytoene + 2 diphosphate. Its pathway is carotenoid biosynthesis; beta-carotene biosynthesis. It participates in carotenoid biosynthesis; phytoene biosynthesis; all-trans-phytoene from geranylgeranyl diphosphate: step 1/1. Bifunctional enzyme that catalyzes the reactions from geranylgeranyl diphosphate to phytoene (phytoene synthase) and from lycopene to beta-carotene via the intermediate gamma-carotene and from 3,4-didehydrolycopene to torulene (lycopene cyclase). Torulene is further processed to the acidic carotenoid neurosporaxanthin. The cyclase preferentially catalyzes single cyclizations at only one end of the substrate to produce monocyclic carotenoids. Neurosporaxanthin is synthesized from geranyl-geranyl pyrophosphate (GGPP) through several enzymatic activities. Phytoene synthase activity performed by the bifunctional enzyme al-2 first produces phytoene from geranyl-geranyl pyrophosphate (GGPP). The phytoene dehydrogenase al-1 then introduces 5 desaturations to lead to 3,4-didehydrolycopene via the intermediates phytofluene, zeta-carotene, neurosporene and lycopene. Al-2 cyclase activity then converts 3,4-didehydrolycopene into torulene. Al-2 can also convet lycopene into gamma-carotene which in turn is converted to beta-carotene by an additional al-2 cyclization reaction. Torulene is the substrate of the dioxidase cao-2 that breaks the molecule, removing five carbon atoms to yield beta-apo-4'-carotenal, whereas the aldehyde dehydrogenase ylo-1 mediates the last step by converting beta-apo-4'-carotenal into neurosporaxanthin. The polypeptide is Bifunctional lycopene cyclase/phytoene synthase (Neurospora crassa (strain ATCC 24698 / 74-OR23-1A / CBS 708.71 / DSM 1257 / FGSC 987)).